Reading from the N-terminus, the 81-residue chain is Cytochrome b559 subunit alpha (81 aa).

The chain crosses the membrane as a helical span at residues 21 to 35 (VIHSITIPMLFVAGW). H23 lines the heme pocket.

This sequence belongs to the PsbE/PsbF family. As to quaternary structure, heterodimer of an alpha subunit and a beta subunit. PSII is composed of 1 copy each of membrane proteins PsbA, PsbB, PsbC, PsbD, PsbE, PsbF, PsbH, PsbI, PsbJ, PsbK, PsbL, PsbM, PsbT, PsbX, PsbY, PsbZ, Psb30/Ycf12, peripheral proteins PsbO, CyanoQ (PsbQ), PsbU, PsbV and a large number of cofactors. It forms dimeric complexes. Requires heme b as cofactor.

It is found in the cellular thylakoid membrane. This b-type cytochrome is tightly associated with the reaction center of photosystem II (PSII). PSII is a light-driven water:plastoquinone oxidoreductase that uses light energy to abstract electrons from H(2)O, generating O(2) and a proton gradient subsequently used for ATP formation. It consists of a core antenna complex that captures photons, and an electron transfer chain that converts photonic excitation into a charge separation. The protein is Cytochrome b559 subunit alpha of Gloeothece citriformis (strain PCC 7424) (Cyanothece sp. (strain PCC 7424)).